The sequence spans 229 residues: Flagellar L-ring protein (229 aa).

The first 25 residues, 1–25, serve as a signal peptide directing secretion; it reads MKQVRLLPSAPVRAVCALAVAALAG. Cysteine 26 carries the N-palmitoyl cysteine lipid modification. Residue cysteine 26 is the site of S-diacylglycerol cysteine attachment.

The protein belongs to the FlgH family. In terms of assembly, the basal body constitutes a major portion of the flagellar organelle and consists of four rings (L,P,S, and M) mounted on a central rod.

The protein resides in the cell outer membrane. Its subcellular location is the bacterial flagellum basal body. Functionally, assembles around the rod to form the L-ring and probably protects the motor/basal body from shearing forces during rotation. The polypeptide is Flagellar L-ring protein (Burkholderia ambifaria (strain MC40-6)).